The chain runs to 475 residues: Squamosa promoter-binding-like protein 12 (475 aa).

The interval 49–73 (NHGSTNSSGGTFTSSSELANGSSKS) is disordered. Residues 51 to 73 (GSTNSSGGTFTSSSELANGSSKS) are compositionally biased toward low complexity. Residues 177–254 (SSYCQVEGCK…SDHNARRRKP (78 aa)) form an SBP-type zinc finger. Cys-180, Cys-185, Cys-202, His-205, Cys-221, Cys-224, His-228, and Cys-240 together coordinate Zn(2+). The Bipartite nuclear localization signal motif lies at 237–253 (KKSCRRRLSDHNARRRK). The disordered stretch occupies residues 437–475 (GGGGFWQDGDDPPPLDHASQAQAFMHPGNGSSSGYGHLH). Residues 465 to 475 (NGSSSGYGHLH) are compositionally biased toward polar residues.

In terms of tissue distribution, expressed in young panicles.

It localises to the nucleus. Its function is as follows. Trans-acting factor that binds specifically to the consensus nucleotide sequence 5'-TNCGTACAA-3'. May be involved in panicle development. This is Squamosa promoter-binding-like protein 12 (SPL12) from Oryza sativa subsp. japonica (Rice).